Reading from the N-terminus, the 130-residue chain is Small ribosomal subunit protein uS9 (130 aa).

The protein belongs to the universal ribosomal protein uS9 family.

This chain is Small ribosomal subunit protein uS9, found in Xanthomonas axonopodis pv. citri (strain 306).